A 202-amino-acid chain; its full sequence is Outer-membrane lipoprotein LolB (202 aa).

An N-terminal signal peptide occupies residues M1–G18. C19 is lipidated: N-palmitoyl cysteine. C19 is lipidated: S-diacylglycerol cysteine.

This sequence belongs to the LolB family. As to quaternary structure, monomer.

It is found in the cell outer membrane. Functionally, plays a critical role in the incorporation of lipoproteins in the outer membrane after they are released by the LolA protein. The sequence is that of Outer-membrane lipoprotein LolB from Vibrio vulnificus (strain YJ016).